The following is a 332-amino-acid chain: 30 kDa heat shock protein (332 aa).

Residues 1–34 (MNDTLSSFLNRNEALGLNPPHGLDMHITKRGSDW) are Extracellular-facing. A helical transmembrane segment spans residues 35-55 (LWAVFAVFGFILLCYVVMFFI). The Cytoplasmic portion of the chain corresponds to 56–65 (AENKGSRLTR). The chain crosses the membrane as a helical span at residues 66–86 (YALAPAFLITFFEFFAFFTYA). Topologically, residues 87 to 121 (SDLGWTGVQAEFNHVKVSKSITGEVPGIRQIFYSK) are extracellular. Residues 122–142 (YIAWFLSWPCLLFLIELAAST) form a helical membrane-spanning segment. Residues 143–157 (TGENDDISALDMVHS) are Cytoplasmic-facing. Residues 158 to 178 (LLIQIVGTLFWVVSLLVGSLI) traverse the membrane as a helical segment. Residues 179-181 (KST) lie on the Extracellular side of the membrane. A helical transmembrane segment spans residues 182-202 (YKWGYYTIGAVAMLVTQGVIC). Topologically, residues 203–215 (QRQFFNLKTRGFN) are cytoplasmic. A helical membrane pass occupies residues 216 to 236 (ALMLCTCMVIVWLYFICWGLS). Residues 237 to 248 (DGGNRIQPDGEA) lie on the Extracellular side of the membrane. The chain crosses the membrane as a helical span at residues 249–269 (IFYGVLDLCVFAIYPCYLLIA). The Cytoplasmic segment spans residues 270 to 332 (VSRDGKLPRL…EAEQAVEDTA (63 aa)). Residues 290–332 (ATDDVEDAAPETKEAVPESPRASGETAIHEPEPEAEQAVEDTA) are disordered. At Ser-308 the chain carries Phosphoserine. Over residues 322–332 (PEAEQAVEDTA) the composition is skewed to acidic residues. The residue at position 331 (Thr-331) is a Phosphothreonine.

Belongs to the archaeal/bacterial/fungal opsin family.

Its subcellular location is the membrane. Probably cooperates with other heat shock proteins in the translocation of polypeptides through membranes. It may counteract the altering effect of heat shock on the plasma membrane. This chain is 30 kDa heat shock protein (HSP30), found in Saccharomyces cerevisiae (strain ATCC 204508 / S288c) (Baker's yeast).